Reading from the N-terminus, the 208-residue chain is Small ribosomal subunit protein uS4 (208 aa).

Residues 98 to 160 (CRLDNVVYRM…AKKQSRIQLA (63 aa)) enclose the S4 RNA-binding domain.

It belongs to the universal ribosomal protein uS4 family. In terms of assembly, part of the 30S ribosomal subunit. Contacts protein S5. The interaction surface between S4 and S5 is involved in control of translational fidelity.

One of the primary rRNA binding proteins, it binds directly to 16S rRNA where it nucleates assembly of the body of the 30S subunit. In terms of biological role, with S5 and S12 plays an important role in translational accuracy. This is Small ribosomal subunit protein uS4 from Vesicomyosocius okutanii subsp. Calyptogena okutanii (strain HA).